A 282-amino-acid chain; its full sequence is Phosphatidylserine decarboxylase proenzyme (282 aa).

Residues D88, H144, and S247 each act as charge relay system; for autoendoproteolytic cleavage activity in the active site. S247 (schiff-base intermediate with substrate; via pyruvic acid; for decarboxylase activity) is an active-site residue. S247 carries the pyruvic acid (Ser); by autocatalysis modification.

The protein belongs to the phosphatidylserine decarboxylase family. PSD-B subfamily. Prokaryotic type I sub-subfamily. In terms of assembly, heterodimer of a large membrane-associated beta subunit and a small pyruvoyl-containing alpha subunit. The cofactor is pyruvate. In terms of processing, is synthesized initially as an inactive proenzyme. Formation of the active enzyme involves a self-maturation process in which the active site pyruvoyl group is generated from an internal serine residue via an autocatalytic post-translational modification. Two non-identical subunits are generated from the proenzyme in this reaction, and the pyruvate is formed at the N-terminus of the alpha chain, which is derived from the carboxyl end of the proenzyme. The autoendoproteolytic cleavage occurs by a canonical serine protease mechanism, in which the side chain hydroxyl group of the serine supplies its oxygen atom to form the C-terminus of the beta chain, while the remainder of the serine residue undergoes an oxidative deamination to produce ammonia and the pyruvoyl prosthetic group on the alpha chain. During this reaction, the Ser that is part of the protease active site of the proenzyme becomes the pyruvoyl prosthetic group, which constitutes an essential element of the active site of the mature decarboxylase.

The protein resides in the cell membrane. The enzyme catalyses a 1,2-diacyl-sn-glycero-3-phospho-L-serine + H(+) = a 1,2-diacyl-sn-glycero-3-phosphoethanolamine + CO2. The protein operates within phospholipid metabolism; phosphatidylethanolamine biosynthesis; phosphatidylethanolamine from CDP-diacylglycerol: step 2/2. Catalyzes the formation of phosphatidylethanolamine (PtdEtn) from phosphatidylserine (PtdSer). The protein is Phosphatidylserine decarboxylase proenzyme of Xanthomonas campestris pv. campestris (strain B100).